The following is a 1162-amino-acid chain: PAN2-PAN3 deadenylation complex catalytic subunit PAN2 (1162 aa).

4 WD repeats span residues 27–66, 153–193, 196–233, and 300–339; these read AKEK…YTRH, NTVQ…VVKT, GHSC…NVYD, and HPCQ…TGFT. The interval 341-491 is linker; the sequence is TATTILEYPD…LMNYKPSNDR (151 aa). The segment at 401-443 is disordered; that stretch reads VPLPPKSSAASSSHTALSTSSDSRPNTARSGNPSSGGQKYRLL. Over residues 407–423 the composition is skewed to low complexity; sequence SSAASSSHTALSTSSDS. Residues 424–437 show a composition bias toward polar residues; the sequence is RPNTARSGNPSSGG. The USP domain occupies 492 to 904; sequence EVPPAFTKLQ…TPEIAIYSDA (413 aa). One can recognise an Exonuclease domain in the interval 956–1126; that stretch reads VALDAEFVAL…IEDAYTALVL (171 aa). Positions 959, 961, 1068, and 1119 each coordinate a divalent metal cation.

Belongs to the peptidase C19 family. PAN2 subfamily. Forms a heterotrimer with an asymmetric homodimer of the regulatory subunit PAN3 to form the poly(A)-nuclease (PAN) deadenylation complex. It depends on a divalent metal cation as a cofactor.

It localises to the cytoplasm. The catalysed reaction is Exonucleolytic cleavage of poly(A) to 5'-AMP.. Its activity is regulated as follows. Positively regulated by the regulatory subunit PAN3. In terms of biological role, catalytic subunit of the poly(A)-nuclease (PAN) deadenylation complex, one of two cytoplasmic mRNA deadenylases involved in mRNA turnover. PAN specifically shortens poly(A) tails of RNA and the activity is stimulated by poly(A)-binding protein PAB1. PAN deadenylation is followed by rapid degradation of the shortened mRNA tails by the CCR4-NOT complex. Deadenylated mRNAs are then degraded by two alternative mechanisms, namely exosome-mediated 3'-5' exonucleolytic degradation, or deadenylation-dependent mRNA decaping and subsequent 5'-3' exonucleolytic degradation by XRN1. May also be involved in post-transcriptional maturation of mRNA poly(A) tails. The sequence is that of PAN2-PAN3 deadenylation complex catalytic subunit PAN2 from Eremothecium gossypii (strain ATCC 10895 / CBS 109.51 / FGSC 9923 / NRRL Y-1056) (Yeast).